Here is a 107-residue protein sequence, read N- to C-terminus: Anti-adapter protein IraM (107 aa).

It belongs to the IraM/RssC family.

The protein resides in the cytoplasm. Functionally, inhibits RpoS proteolysis by regulating RssB activity, thereby increasing the stability of the sigma stress factor RpoS during magnesium starvation. This is Anti-adapter protein IraM from Shigella dysenteriae serotype 1 (strain Sd197).